The sequence spans 694 residues: DNA-directed RNA polymerase subunit beta' (694 aa).

Zn(2+)-binding residues include C69, C71, C87, and C90. Residues D489, D491, and D493 each contribute to the Mg(2+) site.

This sequence belongs to the RNA polymerase beta' chain family. RpoC1 subfamily. In plastids the minimal PEP RNA polymerase catalytic core is composed of four subunits: alpha, beta, beta', and beta''. When a (nuclear-encoded) sigma factor is associated with the core the holoenzyme is formed, which can initiate transcription. It depends on Mg(2+) as a cofactor. The cofactor is Zn(2+).

Its subcellular location is the plastid. The protein localises to the chloroplast. The enzyme catalyses RNA(n) + a ribonucleoside 5'-triphosphate = RNA(n+1) + diphosphate. In terms of biological role, DNA-dependent RNA polymerase catalyzes the transcription of DNA into RNA using the four ribonucleoside triphosphates as substrates. In Adiantum capillus-veneris (Maidenhair fern), this protein is DNA-directed RNA polymerase subunit beta'.